The following is a 371-amino-acid chain: tRNA-specific 2-thiouridylase MnmA (371 aa).

ATP-binding positions include 12-19 (GMSGGVDS) and M38. An interaction with target base in tRNA region spans residues 98-100 (NPD). C103 functions as the Nucleophile in the catalytic mechanism. A disulfide bridge links C103 with C200. G128 is a binding site for ATP. Residues 150–152 (KDQ) form an interaction with tRNA region. Catalysis depends on C200, which acts as the Cysteine persulfide intermediate. The interval 312–313 (RY) is interaction with tRNA.

The protein belongs to the MnmA/TRMU family. Interacts with TusE.

The protein localises to the cytoplasm. It catalyses the reaction S-sulfanyl-L-cysteinyl-[protein] + uridine(34) in tRNA + AH2 + ATP = 2-thiouridine(34) in tRNA + L-cysteinyl-[protein] + A + AMP + diphosphate + H(+). Catalyzes the 2-thiolation of uridine at the wobble position (U34) of tRNA(Lys), tRNA(Glu) and tRNA(Gln), leading to the formation of s(2)U34, the first step of tRNA-mnm(5)s(2)U34 synthesis. Sulfur is provided by IscS, via a sulfur-relay system. Binds ATP and its substrate tRNAs. The polypeptide is tRNA-specific 2-thiouridylase MnmA (Yersinia pseudotuberculosis serotype O:1b (strain IP 31758)).